Reading from the N-terminus, the 128-residue chain is Large-conductance mechanosensitive channel (128 aa).

2 helical membrane-spanning segments follow: residues 10 to 30 (FAMRGNVVDMAVGVIIGSAFG) and 76 to 96 (GLFIQNVIDFIIIAFAIFMMI).

The protein belongs to the MscL family. As to quaternary structure, homopentamer.

Its subcellular location is the cell inner membrane. Channel that opens in response to stretch forces in the membrane lipid bilayer. May participate in the regulation of osmotic pressure changes within the cell. This is Large-conductance mechanosensitive channel from Haemophilus influenzae (strain PittEE).